The following is a 559-amino-acid chain: Paxillin (559 aa).

The short motif at 3–15 (DLDALLADLESTT) is the LD motif 1 element. Positions 17–139 (HISKRPVFLT…SPTMTSTSLG (123 aa)) are disordered. Tyr-31 bears the Phosphotyrosine mark. The span at 45 to 54 (VPPPVPPPPS) shows a compositional bias: pro residues. Positions 79–98 (QQPQSQSPIYSSSAKSSSAS) are enriched in low complexity. Phosphotyrosine; by FAK1 is present on Tyr-118. Polar residues predominate over residues 121 to 137 (PNKQKSAEPSPTMTSTS). Residues 144–156 (ELDRLLLELNAVQ) carry the LD motif 2 motif. Disordered stretches follow at residues 158 to 213 (NPPS…GIED) and 225 to 262 (LESS…SASS). The short motif at 217-229 (SVESLLDELESSV) is the LD motif 3 element. Positions 237–262 (TVSQGEVSSPQRVNASQQQTRISASS) are enriched in polar residues. The required for binding to PARVA and ILK stretch occupies residues 263-282 (ATRELDELMASLSDFKFMAQ). Short sequence motifs (LD motif) lie at residues 266–277 (ELDELMASLSDF) and 301–313 (QLDT…QSDL). The disordered stretch occupies residues 281–301 (AQGKAGGSSSPPSTTPKPGSQ). LIM zinc-binding domains are found at residues 326 to 376 (CGAC…CEKD), 385 to 435 (CYYC…CRKD), 444 to 494 (CGGC…CEVH), and 503 to 553 (CSGC…CQNC).

In terms of assembly, interacts (via LD motif 4) with PARVA/PARVIN and ILK. Post-translationally, phosphorylated on tyrosine residues during integrin-mediated cell adhesion, embryonic development, fibroblast transformation and following stimulation of cells by mitogens.

The protein resides in the cytoplasm. It is found in the cytoskeleton. Its subcellular location is the cell junction. The protein localises to the focal adhesion. It localises to the cell cortex. Functionally, cytoskeletal protein involved in actin-membrane attachment at sites of cell adhesion to the extracellular matrix (focal adhesion). Binds in vitro to vinculin as well as to the SH3 domain of c-SRC and, when tyrosine phosphorylated, to the SH2 domain of v-CRK. The polypeptide is Paxillin (PXN) (Gallus gallus (Chicken)).